The sequence spans 617 residues: Dihydroxy-acid dehydratase (617 aa).

Aspartate 81 serves as a coordination point for Mg(2+). A [2Fe-2S] cluster-binding site is contributed by cysteine 122. Positions 123 and 124 each coordinate Mg(2+). N6-carboxylysine is present on lysine 124. Position 195 (cysteine 195) interacts with [2Fe-2S] cluster. Glutamate 492 lines the Mg(2+) pocket. Residue serine 518 is the Proton acceptor of the active site.

The protein belongs to the IlvD/Edd family. As to quaternary structure, homodimer. The cofactor is [2Fe-2S] cluster. Requires Mg(2+) as cofactor.

The catalysed reaction is (2R)-2,3-dihydroxy-3-methylbutanoate = 3-methyl-2-oxobutanoate + H2O. It catalyses the reaction (2R,3R)-2,3-dihydroxy-3-methylpentanoate = (S)-3-methyl-2-oxopentanoate + H2O. The protein operates within amino-acid biosynthesis; L-isoleucine biosynthesis; L-isoleucine from 2-oxobutanoate: step 3/4. It participates in amino-acid biosynthesis; L-valine biosynthesis; L-valine from pyruvate: step 3/4. Functions in the biosynthesis of branched-chain amino acids. Catalyzes the dehydration of (2R,3R)-2,3-dihydroxy-3-methylpentanoate (2,3-dihydroxy-3-methylvalerate) into 2-oxo-3-methylpentanoate (2-oxo-3-methylvalerate) and of (2R)-2,3-dihydroxy-3-methylbutanoate (2,3-dihydroxyisovalerate) into 2-oxo-3-methylbutanoate (2-oxoisovalerate), the penultimate precursor to L-isoleucine and L-valine, respectively. This is Dihydroxy-acid dehydratase from Azorhizobium caulinodans (strain ATCC 43989 / DSM 5975 / JCM 20966 / LMG 6465 / NBRC 14845 / NCIMB 13405 / ORS 571).